The sequence spans 835 residues: MSQQHTLPVTLSPALSQELLKTVPPPVNTQQEQMKQPTPLPPPCQKVPVELPVEVPSKQEEKHMTAVKGLPEQECEQQQQEPQEQELQQQHWEQHEEHQKAENPEQQLKQEKAQRDQQLNEQLEEEKKLLDQRLDQELVKRDEQLGMKKEQLLELPEQQEQHLKHLEQQEGQLELPEQQEGQLKHLEQQEGQLKHLEQQEGQLEVPEEQVGQLKYLEQQEGQLKHLDQQEGQLKHLDQQEGQLKHLDQQEGQLKHLDQQEGQLKHLDQQEGQLELPEQQEGQLKHLEQQEGQLKHLEHEEGQLEVPEEQVGQLKYLEQQEGQLKHLDQQEGQLELPEQQEGQLKHLEQQEGQLKHLEHQKGQLEVPEEQVGQLKYLEQQEGQLKHLDQQEGQLELPEQQEGQLKHLEQQEGQLKHLEHQEGQLEVPEEQVGQLKYLEQQEGQLKHLDQQEGQLKHLDQQEKQLELPEQQVGQLKHLEQQEGQLEVPEEQVGQLKYLEQQEGQLKHLDQQEGQLELPEQQEGQLKHLEQQEGQLKHLEHQEGQLEVPEEQVGQLKYLEQQEGQLKHLDQQEGQLKHLDQQEKQLELPEQQVGQLKHLEQQEGQLEHLEGQEGQLEHLEHQEGQLGLPEQQVWQLKQLEKQEGQPKNLEEEEGQLKHLVQQEGQLEQQEGQVEHLEEQVGQLKHLEEQEGQLKYLEQQQGQLEVPEQQVGQPKHLEQEEKQLELPEQQEGQLKHLEKQEAQLELPEQQVGQPKHLEQQEKQLEHPEQKDGQLKHLEQQEGQLKNLEQQKGQLEQPVFAPAPGQVQDIQPALPTKGEVLLPVEQQQQKQEVQWPPKHK.

Residues 1-15 show a composition bias toward polar residues; that stretch reads MSQQHTLPVTLSPAL. Disordered stretches follow at residues 1 to 133, 150 to 206, 221 to 285, 321 to 342, 381 to 428, 446 to 486, 501 to 548, and 566 to 809; these read MSQQ…LDQR, EQLL…LEVP, GQLK…QLKH, GQLK…QEGQ, GQLK…VPEE, LDQQ…LEVP, and LDQQ…QPAL. Over residues 76–91 the composition is skewed to low complexity; sequence EQQQQEPQEQELQQQH. Composition is skewed to basic and acidic residues over residues 92–115 and 159–168; these read WEQH…KAQR and QEQHLKHLEQ. The segment covering 169–181 has biased composition (low complexity); it reads QEGQLELPEQQEG. Basic and acidic residues-rich tracts occupy residues 182 to 198 and 222 to 268; these read QLKH…HLEQ and QLKH…HLDQ. Composition is skewed to low complexity over residues 269-281, 329-341, and 389-401; these read QEGQ…QQEG. Composition is skewed to basic and acidic residues over residues 402–421 and 446–464; these read QLKH…HQEG and LDQQ…KQLE. The span at 509-521 shows a compositional bias: low complexity; it reads QEGQLELPEQQEG. 3 stretches are compositionally biased toward basic and acidic residues: residues 522–541, 566–584, and 594–620; these read QLKH…HQEG, LDQQ…KQLE, and KHLE…EHQE. Positions 655–668 are enriched in low complexity; the sequence is HLVQQEGQLEQQEG. The segment covering 669 to 685 has biased composition (basic and acidic residues); that stretch reads QVEHLEEQVGQLKHLEE. Positions 693–710 are enriched in low complexity; sequence LEQQQGQLEVPEQQVGQP. Composition is skewed to basic and acidic residues over residues 711-721, 729-738, and 751-775; these read KHLEQEEKQLE, QLKHLEKQEA, and KHLE…HLEQ. A compositionally biased stretch (polar residues) spans 776 to 789; sequence QEGQLKNLEQQKGQ.

It belongs to the involucrin family. In terms of assembly, directly or indirectly cross-linked to cornifelin (CNFN). In terms of processing, substrate of transglutaminase. Specific glutamines or lysines are cross-linked to keratins, desmoplakin and to inter involucrin molecules. In terms of tissue distribution, keratinocytes of epidermis and other stratified squamous epithelia.

The protein localises to the cytoplasm. Functionally, part of the insoluble cornified cell envelope (CE) of stratified squamous epithelia. This chain is Involucrin (IVL), found in Pongo pygmaeus (Bornean orangutan).